The chain runs to 329 residues: Lipoyl synthase (329 aa).

The [4Fe-4S] cluster site is built by Cys55, Cys60, Cys66, Cys81, Cys85, Cys88, and Ser292. The 215-residue stretch at 67 to 281 folds into the Radical SAM core domain; sequence WEDREATFLI…KAEAEAIGFL (215 aa).

Belongs to the radical SAM superfamily. Lipoyl synthase family. [4Fe-4S] cluster is required as a cofactor.

It localises to the cytoplasm. The catalysed reaction is [[Fe-S] cluster scaffold protein carrying a second [4Fe-4S](2+) cluster] + N(6)-octanoyl-L-lysyl-[protein] + 2 oxidized [2Fe-2S]-[ferredoxin] + 2 S-adenosyl-L-methionine + 4 H(+) = [[Fe-S] cluster scaffold protein] + N(6)-[(R)-dihydrolipoyl]-L-lysyl-[protein] + 4 Fe(3+) + 2 hydrogen sulfide + 2 5'-deoxyadenosine + 2 L-methionine + 2 reduced [2Fe-2S]-[ferredoxin]. It participates in protein modification; protein lipoylation via endogenous pathway; protein N(6)-(lipoyl)lysine from octanoyl-[acyl-carrier-protein]: step 2/2. Functionally, catalyzes the radical-mediated insertion of two sulfur atoms into the C-6 and C-8 positions of the octanoyl moiety bound to the lipoyl domains of lipoate-dependent enzymes, thereby converting the octanoylated domains into lipoylated derivatives. The polypeptide is Lipoyl synthase (Clavibacter sepedonicus (Clavibacter michiganensis subsp. sepedonicus)).